The primary structure comprises 123 residues: Probable U6 snRNA-associated Sm-like protein LSm4 (123 aa).

Residues 3 to 76 (LPLSLLKTAQ…IKYLRIPETV (74 aa)) form the Sm domain. A compositionally biased stretch (basic and acidic residues) spans 85 to 97 (NEVRRQQQREQSR). The disordered stretch occupies residues 85–123 (NEVRRQQQREQSRGRGGGRGGRGGHRGGGGNRGGRGGAR). Residues 98–123 (GRGGGRGGRGGHRGGGGNRGGRGGAR) show a composition bias toward gly residues.

This sequence belongs to the snRNP Sm proteins family. Component of the precatalytic spliceosome (spliceosome B complex). Component of the U4/U6-U5 tri-snRNP complex, a building block of the precatalytic spliceosome (spliceosome B complex). LSM2, LSM3, LSM4, LSM5, LSM6, LSM7 and LSM8 form a heptameric, ring-shaped subcomplex (the LSM2-8 complex) that is part of the U4/U6-U5 tri-snRNP complex and the precatalytic spliceosome.

It is found in the nucleus. In terms of biological role, plays a role in pre-mRNA splicing as component of the U4/U6-U5 tri-snRNP complex that is involved in spliceosome assembly, and as component of the precatalytic spliceosome (spliceosome B complex). The heptameric LSM2-8 complex binds specifically to the 3'-terminal U-tract of U6 snRNA. The sequence is that of Probable U6 snRNA-associated Sm-like protein LSm4 (lsm-4) from Caenorhabditis elegans.